The sequence spans 580 residues: Myb-like protein C (580 aa).

Disordered regions lie at residues 1 to 58, 73 to 101, 121 to 203, and 354 to 380; these read MTMI…YGSN, QYSI…TLLS, NVYN…SSTN, and SDND…NPPN. 3 stretches are compositionally biased toward low complexity: residues 20-47, 87-101, and 126-203; these read NNNN…NNNN, NSTM…TLLS, and PHQS…SSTN. A compositionally biased stretch (basic residues) spans 361 to 371; sequence KKKRERIRKSV. HTH myb-type domains are found at residues 368 to 430 and 431 to 482; these read RKSV…CPAI and RKGS…SREV. DNA-binding regions (H-T-H motif) lie at residues 402-426 and 454-478; these read WKKI…KRVL and WKNV…KSCM. In terms of domain architecture, Myb-like spans 484–546; it reads WSSREDEILQ…ECKTRYFQLN (63 aa).

Its subcellular location is the nucleus. Functionally, transcription activator required for the culmination, at the time of the fruiting body formation. Regulates genes involved in the cell differentiation within the fruiting body. This chain is Myb-like protein C (mybC), found in Dictyostelium discoideum (Social amoeba).